The primary structure comprises 330 residues: Autoinducer 2 import system permease protein LsrD (330 aa).

Residues 1 to 4 (MRIR) are Cytoplasmic-facing. A helical transmembrane segment spans residues 5-25 (YGWELALAALLVIEIVAFGAI). At 26–42 (NPRMLDLNMLLFSTSDF) the chain is on the periplasmic side. The helical transmembrane segment at 43–63 (ICIGIVALPLTMVIVSGGIDI) threads the bilayer. Residues 64–67 (SFGS) are Cytoplasmic-facing. Transmembrane regions (helical) follow at residues 68 to 88 (TIGL…PMPL) and 89 to 109 (AILL…GLII). The Cytoplasmic segment spans residues 110-115 (YTKVNP). The helical transmembrane segment at 116 to 136 (LVITLGTLYLFAGSALLLSGM) threads the bilayer. The Periplasmic segment spans residues 137–159 (AGATGYEGIGGFPMAFTDFANLD). The helical transmembrane segment at 160–180 (VLGLPVPLIIFLICLLVFWLW) threads the bilayer. Over 181–209 (LHKTHAGRNVFLIGQSPRVALYSAIPVNR) the chain is Cytoplasmic. The helical transmembrane segment at 210–230 (TLCALYAMTGLASAVAAVLLV) threads the bilayer. The Periplasmic segment spans residues 231–237 (SYFGSAR). The next 2 helical transmembrane spans lie at 238–258 (SDLG…GGAN) and 259–279 (IYGG…VGYL). At 280–285 (QQGLQM) the chain is on the periplasmic side. A helical membrane pass occupies residues 286–306 (AGVPNQVSSALSGALLIVVVV). The Cytoplasmic segment spans residues 307 to 330 (GRSVSLHRQQIKEWLARRANNPLP).

The protein belongs to the binding-protein-dependent transport system permease family. AraH/RbsC subfamily. The complex is composed of two ATP-binding proteins (LsrA), two transmembrane proteins (LsrC and LsrD) and a solute-binding protein (LsrB).

It localises to the cell inner membrane. Functionally, part of the ABC transporter complex LsrABCD involved in autoinducer 2 (AI-2) import. Probably responsible for the translocation of the substrate across the membrane. This is Autoinducer 2 import system permease protein LsrD (lsrD) from Shigella flexneri serotype 5b (strain 8401).